The primary structure comprises 570 residues: Zeta-carotene desaturase, chloroplastic/chromoplastic (570 aa).

The span at 1 to 16 (MASVAATTTLAPALAP) shows a compositional bias: low complexity. A disordered region spans residues 1–33 (MASVAATTTLAPALAPRRARPGTGLVPPRRASA).

Belongs to the zeta carotene desaturase family. NAD(+) is required as a cofactor. Requires NADP(+) as cofactor. The cofactor is FAD.

The protein localises to the plastid. It localises to the chloroplast. It is found in the chromoplast. The catalysed reaction is 9,9'-di-cis-zeta-carotene + 2 a quinone = 7,7',9,9'-tetra-cis-lycopene + 2 a quinol. It functions in the pathway carotenoid biosynthesis; lycopene biosynthesis. Functionally, catalyzes the conversion of zeta-carotene to lycopene via the intermediary of neurosporene. It carries out two consecutive desaturations (introduction of double bonds) at positions C-7 and C-7'. This is Zeta-carotene desaturase, chloroplastic/chromoplastic (ZDS1) from Zea mays (Maize).